A 117-amino-acid polypeptide reads, in one-letter code: Large ribosomal subunit protein bL20c (117 aa).

It belongs to the bacterial ribosomal protein bL20 family.

The protein resides in the plastid. Its subcellular location is the chloroplast. In terms of biological role, binds directly to 23S ribosomal RNA and is necessary for the in vitro assembly process of the 50S ribosomal subunit. It is not involved in the protein synthesizing functions of that subunit. This is Large ribosomal subunit protein bL20c from Calycanthus floridus var. glaucus (Eastern sweetshrub).